Reading from the N-terminus, the 386-residue chain is ADNQHPTVYQKVASQMHLSSSLSQDVHARYGGIQRPALSQRRFPYGNYSNAGLQTCQATQDLSLIAANASPVFVQAPQEKGLAAFATDFLMGGVSAAVSKTAAAPIERVKLLIQNQDEMIKAGRLSEPYKGIGDCFSRTIKDEGFAALWRGNTANVIRYFPTQALNFAFKDYFKRLFNFKKDRDGYWKWFAGNLASGGGAGASSLLFVYSLDYARTRLANDAKAAKKGGGGRQFDGLVDVYRKTLKSDGVAGLYRGFNISCVGIIVYRGLYFGMYDSLKPVLLTGKMEDSFFASFALGWLITNGAGLASYPIDTVRRRMMMTSGEAVKYKSSFDAFNQILKNEGPKSLFKGAGANVLRAVAGAGVLAGYDKLQVIVFGKKYGSGGG.

A mitochondrion-targeting transit peptide spans 1–76 (ADNQHPTVYQ…ANASPVFVQA (76 aa)). 3 Solcar repeats span residues 83 to 176 (AAFA…FKRL), 188 to 281 (KWFA…LKPV), and 289 to 375 (DSFF…LQVI). Helical transmembrane passes span 85 to 112 (FATDFLMGGVSAAVSKTAAAPIERVKLL), 153 to 177 (TANVIRYFPTQALNFAFKDYFKRLF), 186 to 206 (YWKWFAGNLASGGGAGASSLL), 257 to 278 (FNISCVGIIVYRGLYFGMYDSL), and 292 to 312 (FASFALGWLITNGAGLASYPI). Residues Arg-158 and Lys-170 each coordinate ADP. Arg-316 provides a ligand contact to ADP. Residues 316–321 (RRRMMM) form an important for transport activity region. The Nucleotide carrier signature motif signature appears at 316–321 (RRRMMM). The chain crosses the membrane as a helical span at residues 352 to 372 (AGANVLRAVAGAGVLAGYDKL).

It belongs to the mitochondrial carrier (TC 2.A.29) family. In terms of assembly, monomer.

It localises to the mitochondrion inner membrane. The catalysed reaction is ADP(in) + ATP(out) = ADP(out) + ATP(in). Its activity is regulated as follows. The matrix-open state (m-state) is inhibited by the membrane-permeable bongkrekic acid (BKA). The cytoplasmic-open state (c-state) is inhibited by the membrane-impermeable toxic inhibitor carboxyatractyloside (CATR). In terms of biological role, ADP:ATP antiporter that mediates import of ADP into the mitochondrial matrix for ATP synthesis, and export of ATP out to fuel the cell. Cycles between the cytoplasmic-open state (c-state) and the matrix-open state (m-state): operates by the alternating access mechanism with a single substrate-binding site intermittently exposed to either the cytosolic (c-state) or matrix (m-state) side of the inner mitochondrial membrane. In Solanum tuberosum (Potato), this protein is ADP,ATP carrier protein, mitochondrial (ANT1).